Here is a 517-residue protein sequence, read N- to C-terminus: Type II methyltransferase M.CeqI (517 aa).

2 disordered regions span residues 1 to 21 (MVVTSSAGCASRPRGRGRWPR) and 33 to 62 (GRPRRPFLRPTVPGPTSARPRRGRAPHGRS). A compositionally biased stretch (basic residues) spans 51-62 (RPRRGRAPHGRS). 3 TPR repeats span residues 283–316 (AEFYFRLGESYFAHHQYTFAVSYLEQAIDLFENN), 361–394 (ALLLRALGLNRVRQRKLYEAEMYFAEALTIGDHS), and 476–509 (SELAEEIAEYYKQQSLLEKAFYYMKEALHYRTNM).

The enzyme catalyses a 2'-deoxyadenosine in DNA + S-adenosyl-L-methionine = an N(6)-methyl-2'-deoxyadenosine in DNA + S-adenosyl-L-homocysteine + H(+). In terms of biological role, a methylase, recognizes the double-stranded sequence 5'-GATATC-3', methylates A-? on both strands, and protects the DNA from cleavage by the CeqI endonuclease. The chain is Type II methyltransferase M.CeqI (ceqIM) from Rhodococcus hoagii (Corynebacterium equii).